Reading from the N-terminus, the 769-residue chain is Phosphoribosylformylglycinamidine synthase subunit PurL (769 aa).

Polar residues predominate over residues 1 to 13 (MTGTPSAPTTSPD). The interval 1 to 30 (MTGTPSAPTTSPDDQADGPGEGTVDRQPYR) is disordered. Residue histidine 65 is part of the active site. 2 residues coordinate ATP: tyrosine 68 and lysine 109. Glutamate 111 is a binding site for Mg(2+). Residues 112 to 115 (SHNH) and arginine 134 each bind substrate. Histidine 113 functions as the Proton acceptor in the catalytic mechanism. A Mg(2+)-binding site is contributed by aspartate 135. Glutamine 260 provides a ligand contact to substrate. Residue aspartate 288 coordinates Mg(2+). Position 337–339 (337–339 (ESQ)) interacts with substrate. Positions 524 and 561 each coordinate ATP. Residue asparagine 562 coordinates Mg(2+). A substrate-binding site is contributed by serine 564.

This sequence belongs to the FGAMS family. As to quaternary structure, monomer. Part of the FGAM synthase complex composed of 1 PurL, 1 PurQ and 2 PurS subunits.

It localises to the cytoplasm. It carries out the reaction N(2)-formyl-N(1)-(5-phospho-beta-D-ribosyl)glycinamide + L-glutamine + ATP + H2O = 2-formamido-N(1)-(5-O-phospho-beta-D-ribosyl)acetamidine + L-glutamate + ADP + phosphate + H(+). It participates in purine metabolism; IMP biosynthesis via de novo pathway; 5-amino-1-(5-phospho-D-ribosyl)imidazole from N(2)-formyl-N(1)-(5-phospho-D-ribosyl)glycinamide: step 1/2. Its function is as follows. Part of the phosphoribosylformylglycinamidine synthase complex involved in the purines biosynthetic pathway. Catalyzes the ATP-dependent conversion of formylglycinamide ribonucleotide (FGAR) and glutamine to yield formylglycinamidine ribonucleotide (FGAM) and glutamate. The FGAM synthase complex is composed of three subunits. PurQ produces an ammonia molecule by converting glutamine to glutamate. PurL transfers the ammonia molecule to FGAR to form FGAM in an ATP-dependent manner. PurS interacts with PurQ and PurL and is thought to assist in the transfer of the ammonia molecule from PurQ to PurL. The protein is Phosphoribosylformylglycinamidine synthase subunit PurL of Parafrankia sp. (strain EAN1pec).